A 214-amino-acid chain; its full sequence is Ribosomal protein uL16-like (214 aa).

Belongs to the universal ribosomal protein uL16 family. As to quaternary structure, component of a male germ cell-specific 60S large ribosomal subunit (LSU), which contains RPL10L and RPL39L, instead of RPL10 and RPL39 paralogs. The composition of the rest of the complex is similar to classical ribosomes. In terms of tissue distribution, almost testis-specific. Also expressed in pre- and postmenopausal ovary.

The protein resides in the cytoplasm. In terms of biological role, testis-specific component of the ribosome, which is required for the transition from prophase to metaphase in male meiosis I. Compensates for the inactivated X-linked RPL10 paralog during spermatogenesis. The ribosome is a large ribonucleoprotein complex responsible for the synthesis of proteins in the cell. The male germ cell-specific ribosome displays a ribosomal polypeptide exit tunnel of distinct size and charge states compared with the classical ribosome. It is responsible for regulating the biosynthesis and folding of a subset of male germ-cell-specific proteins that are essential for the formation of sperm. This chain is Ribosomal protein uL16-like, found in Homo sapiens (Human).